The sequence spans 337 residues: Carbonic anhydrase 14 (337 aa).

The signal sequence occupies residues 1 to 15; that stretch reads MLFSALLLEVIWILA. Topologically, residues 16-290 are extracellular; it reads ADGGQHWTYE…AGSSYTTGEM (275 aa). The region spanning 20 to 278 is the Alpha-carbonic anhydrase domain; the sequence is QHWTYEGPHG…LNQRMVFASF (259 aa). A disulfide bond links C40 and C221. The active-site Proton donor/acceptor is the H84. H109, H111, and H135 together coordinate Zn(2+). N-linked (GlcNAc...) asparagine glycosylation is present at N213. Residue 217–218 coordinates substrate; it reads TT. A helical membrane pass occupies residues 291-311; sequence LSLGVGILVGCLCLLLAVYFI. Residues 312–337 are Cytoplasmic-facing; the sequence is ARKIRKKRLENRKSVVFTSAQATTEA. Phosphoserine is present on S325.

This sequence belongs to the alpha-carbonic anhydrase family. It depends on Zn(2+) as a cofactor. As to expression, high expression in all parts of the central nervous system and lower expression in adult liver, heart, small intestine, colon, kidney, urinary bladder and skeletal muscle.

It localises to the membrane. It carries out the reaction hydrogencarbonate + H(+) = CO2 + H2O. Its activity is regulated as follows. Activated by histamine, L-adrenaline, L- and D-histidine, and L- and D-phenylalanine. Inhibited by coumarins, saccharin, sulfonamide derivatives such as acetazolamide (AZA) and Foscarnet (phosphonoformate trisodium salt). Reversible hydration of carbon dioxide. This chain is Carbonic anhydrase 14 (CA14), found in Homo sapiens (Human).